Reading from the N-terminus, the 504-residue chain is ATP synthase subunit alpha (504 aa).

170–177 (GDRQTGKT) is a binding site for ATP.

The protein belongs to the ATPase alpha/beta chains family. F-type ATPases have 2 components, CF(1) - the catalytic core - and CF(0) - the membrane proton channel. CF(1) has five subunits: alpha(3), beta(3), gamma(1), delta(1), epsilon(1). CF(0) has four main subunits: a, b, b' and c.

Its subcellular location is the cellular thylakoid membrane. It catalyses the reaction ATP + H2O + 4 H(+)(in) = ADP + phosphate + 5 H(+)(out). Functionally, produces ATP from ADP in the presence of a proton gradient across the membrane. The alpha chain is a regulatory subunit. In Prochlorococcus marinus (strain MIT 9211), this protein is ATP synthase subunit alpha.